The sequence spans 214 residues: Cytochrome b (214 aa).

4 consecutive transmembrane segments (helical) span residues Phe31–Ile51, Trp75–Ile96, Trp111–Leu131, and Phe176–Met196. His81 and His95 together coordinate heme b. Residues His180 and His194 each coordinate heme b. His199 provides a ligand contact to a ubiquinone.

This sequence belongs to the cytochrome b family. The cytochrome bc1 complex contains 3 respiratory subunits (MT-CYB, CYC1 and UQCRFS1), 2 core proteins (UQCRC1 and UQCRC2) and probably 6 low-molecular weight proteins. The cofactor is heme b.

The protein localises to the mitochondrion inner membrane. Its function is as follows. Component of the ubiquinol-cytochrome c reductase complex (complex III or cytochrome b-c1 complex) that is part of the mitochondrial respiratory chain. The b-c1 complex mediates electron transfer from ubiquinol to cytochrome c. Contributes to the generation of a proton gradient across the mitochondrial membrane that is then used for ATP synthesis. This Elapsoidea semiannulata (Angolan garter snake) protein is Cytochrome b (MT-CYB).